A 388-amino-acid chain; its full sequence is S-adenosylmethionine synthase (388 aa).

His16 lines the ATP pocket. Asp18 contributes to the Mg(2+) binding site. Glu44 contributes to the K(+) binding site. 2 residues coordinate L-methionine: Glu57 and Gln100. A flexible loop region spans residues 100–110 (QSADIAQGVNE). Residues 167-169 (DAK), 233-234 (RF), Asp242, 248-249 (RK), Ala265, and Lys269 each bind ATP. Asp242 is a binding site for L-methionine. L-methionine is bound at residue Lys273.

It belongs to the AdoMet synthase family. As to quaternary structure, homotetramer; dimer of dimers. Mg(2+) serves as cofactor. K(+) is required as a cofactor.

The protein localises to the cytoplasm. The enzyme catalyses L-methionine + ATP + H2O = S-adenosyl-L-methionine + phosphate + diphosphate. The protein operates within amino-acid biosynthesis; S-adenosyl-L-methionine biosynthesis; S-adenosyl-L-methionine from L-methionine: step 1/1. Catalyzes the formation of S-adenosylmethionine (AdoMet) from methionine and ATP. The overall synthetic reaction is composed of two sequential steps, AdoMet formation and the subsequent tripolyphosphate hydrolysis which occurs prior to release of AdoMet from the enzyme. The chain is S-adenosylmethionine synthase from Aromatoleum aromaticum (strain DSM 19018 / LMG 30748 / EbN1) (Azoarcus sp. (strain EbN1)).